Reading from the N-terminus, the 310-residue chain is MTATIDNLTSRERATVLADALPWLQRYRDKIVVVKYGGNAMVDEELKAAFAADMVFLRTVGVRPVVVHGGGPQISQMLQRLGIEGEFKGGFRVTSPEVLEIVRMVLFGQVGRDLVGLINSHGPYAVGTSGEDAGLFRAEKRLVEIDGELTDIGQVGNITAVNASSLMGIIDAGRIPVVSTIAPGDDGSVYNINADTAAGALAAALSAERLLILTNVEGLYTDWPNKDSLVSVIGAERLREKLSALGSGMIPKMESCVDAVIHGVSAAHVIDGRVAHSVLLELLTSGGVGTMVVPDTEMTNGTVYRKDNHV.

Substrate-binding positions include 70 to 71 (GG), Arg92, and Asn191.

This sequence belongs to the acetylglutamate kinase family. ArgB subfamily.

It is found in the cytoplasm. The enzyme catalyses N-acetyl-L-glutamate + ATP = N-acetyl-L-glutamyl 5-phosphate + ADP. Its pathway is amino-acid biosynthesis; L-arginine biosynthesis; N(2)-acetyl-L-ornithine from L-glutamate: step 2/4. Functionally, catalyzes the ATP-dependent phosphorylation of N-acetyl-L-glutamate. In Corynebacterium diphtheriae (strain ATCC 700971 / NCTC 13129 / Biotype gravis), this protein is Acetylglutamate kinase.